Consider the following 327-residue polypeptide: Probable cell division protein WhiA (327 aa).

A DNA-binding region (H-T-H motif) is located at residues 275–308; it reads SLEELGRLADPPMTKDAVAGRIRRLLSMADRKAK.

This sequence belongs to the WhiA family.

In terms of biological role, involved in cell division and chromosome segregation. This is Probable cell division protein WhiA from Mycobacterium marinum (strain ATCC BAA-535 / M).